Reading from the N-terminus, the 332-residue chain is Alanine racemase (332 aa).

The active-site Proton acceptor; specific for D-alanine is Lys-33. The residue at position 33 (Lys-33) is an N6-(pyridoxal phosphate)lysine. Residue Arg-115 participates in substrate binding. Tyr-245 (proton acceptor; specific for L-alanine) is an active-site residue. Substrate is bound at residue Met-286.

It belongs to the alanine racemase family. Pyridoxal 5'-phosphate is required as a cofactor.

It carries out the reaction L-alanine = D-alanine. It functions in the pathway amino-acid biosynthesis; D-alanine biosynthesis; D-alanine from L-alanine: step 1/1. Catalyzes the interconversion of L-alanine and D-alanine. May also act on other amino acids. The protein is Alanine racemase (alr) of Nitratiruptor sp. (strain SB155-2).